The following is a 251-amino-acid chain: MNEAVKTLDGWFCLHDFRSIDWAAWRELNPGNQELMLNELSHFLSDMEITKNIGEGEHTIYSILGQKADLVFFTLRDSLEALNEVENRFNKLAIADYLLPTYSYISVVELSNYLASHMAGGEDPYQNKGVRARLYPALPPKKHICFYPMSKKRDGADNWYMLPMEERQKLIRDHGLIGRSYAGKVQQIIGGSIGFDDYEWGVTLFSDDALEFKRIVTEMRFDEASARYAEFGSFFIGNLLPSENLSKLFTI.

Fe-coproporphyrin III contacts are provided by residues Arg133, 147–151, His174, Gln187, and Ser225; that span reads YPMSK. Tyr147 is an active-site residue.

This sequence belongs to the ChdC family. Type 1 subfamily. Requires Fe-coproporphyrin III as cofactor.

The enzyme catalyses Fe-coproporphyrin III + 2 H2O2 + 2 H(+) = heme b + 2 CO2 + 4 H2O. The catalysed reaction is Fe-coproporphyrin III + H2O2 + H(+) = harderoheme III + CO2 + 2 H2O. It carries out the reaction harderoheme III + H2O2 + H(+) = heme b + CO2 + 2 H2O. The protein operates within porphyrin-containing compound metabolism; protoheme biosynthesis. In terms of biological role, involved in coproporphyrin-dependent heme b biosynthesis. Catalyzes the decarboxylation of Fe-coproporphyrin III (coproheme) to heme b (protoheme IX), the last step of the pathway. The reaction occurs in a stepwise manner with a three-propionate intermediate. In Listeria innocua serovar 6a (strain ATCC BAA-680 / CLIP 11262), this protein is Coproheme decarboxylase.